Reading from the N-terminus, the 528-residue chain is Cytochrome P450 monooxygenase lenC (528 aa).

A helical membrane pass occupies residues 5–27; sequence FVLPHPASMGASCILGLLLLTIL. Residue cysteine 469 coordinates heme.

This sequence belongs to the cytochrome P450 family. Requires heme as cofactor.

The protein localises to the membrane. It functions in the pathway alkaloid biosynthesis. Its function is as follows. Nonribosomal peptide synthetase; part of the gene cluster that mediates the biosynthesis of the ergot alkaloids lentopeptins A and B. Within the pathway, lenC catalyzes the post-NRPS oxidative modification steps using as substrate the N-acyldiketopiperazine intermediate produced by the NRPS lenA. Lentopeptin A forms via a stereospecific hydroxylation, followed by a spontaneous bicyclic lactam core formation, while lentopeptin B is produced through an initial dehydrogenation, followed by a bicyclic lactam core formation and stereospecific hydration. The phenylalanine ammonia-lyase lenB provides the cinnamic acid starter unit to the NRPS lenA for the synthesis of the N-acyldiketopiperazine intermediate which in turn is converted into lentopeptins A and B by lenC. This chain is Cytochrome P450 monooxygenase lenC, found in Aspergillus lentulus.